The sequence spans 571 residues: Gag-Pro polyprotein (571 aa).

Glycine 2 carries N-myristoyl glycine; by host lipidation. A PPXY motif motif is present at residues 100–103 (PPPY). 2 repeats span residues 342–362 (PPPG…DCPT) and 367–387 (PPPG…DCPT). 2 CCHC-type zinc fingers span residues 345-362 (GPCY…DCPT) and 370-387 (GPCP…DCPT). The Peptidase A2 domain maps to 447-525 (ALMLVDTGAE…DKWQILGRDV (79 aa)). Catalysis depends on aspartate 452, which acts as the Protease; shared with dimeric partner.

In terms of assembly, homodimer; the homodimers are part of the immature particles. Interacts with human TSG101 and NEDD4; these interactions are essential for budding and release of viral particles. Homodimer; further assembles as homohexamers. In terms of processing, specific enzymatic cleavages by the viral protease yield mature proteins. The polyprotein is cleaved during and after budding, this process is termed maturation. The protease is autoproteolytically processed at its N- and C-termini. Post-translationally, gag polyprotein: Myristoylated. Myristoylation of the matrix (MA) domain mediates the transport and binding of Gag polyproteins to the host plasma membrane and is required for the assembly of viral particles.

It is found in the virion. Functionally, the matrix domain targets Gag, Gag-Pro and Gag-Pro-Pol polyproteins to the plasma membrane via a multipartite membrane binding signal, that includes its myristoylated N-terminus. Its function is as follows. Matrix protein. In terms of biological role, forms the spherical core of the virus that encapsulates the genomic RNA-nucleocapsid complex. Binds strongly to viral nucleic acids and promote their aggregation. Also destabilizes the nucleic acids duplexes via highly structured zinc-binding motifs. Functionally, the aspartyl protease mediates proteolytic cleavages of Gag and Gag-Pol polyproteins during or shortly after the release of the virion from the plasma membrane. Cleavages take place as an ordered, step-wise cascade to yield mature proteins. This process is called maturation. Displays maximal activity during the budding process just prior to particle release from the cell. The sequence is that of Gag-Pro polyprotein from Bos taurus (Bovine).